A 373-amino-acid chain; its full sequence is UBX domain-containing protein 1 (373 aa).

2 disordered regions span residues 39 to 179 (VTEF…QIPR) and 236 to 293 (IKQH…VDES). Polar residues predominate over residues 49–59 (TAGSSEPTGQP). 2 stretches are compositionally biased toward low complexity: residues 60-71 (SAKSSSSTPRES) and 85-94 (LGDLASGAAD). The span at 95–104 (SSDDDDDENQ) shows a compositional bias: acidic residues. The span at 121–132 (DDLKKKIIEKAR) shows a compositional bias: basic and acidic residues. The SEP domain occupies 185-258 (LHFWADGFSV…KYQPFAGKGQ (74 aa)). Positions 292 to 369 (ESQPVVTLQI…PEFKRGGVVV (78 aa)) constitute a UBX domain.

In terms of biological role, involved in CDC48-dependent protein degradation through the ubiquitin/proteasome pathway. In Emericella nidulans (strain FGSC A4 / ATCC 38163 / CBS 112.46 / NRRL 194 / M139) (Aspergillus nidulans), this protein is UBX domain-containing protein 1 (ubx1).